A 1264-amino-acid chain; its full sequence is Protein fantom (1264 aa).

4 coiled-coil regions span residues 64–143 (LKQH…LQVQ), 196–268 (YSNS…NVET), 299–454 (LRIS…ESDI), and 488–555 (NKDL…VHLL). 2 consecutive C2 domains span residues 577 to 714 (KQYK…FCTT) and 773 to 897 (AATT…SGIF). Disordered regions lie at residues 979–1018 (DTIS…YPSK) and 1047–1093 (QLAS…NTKQ). Acidic residues predominate over residues 1056-1080 (SEDETEITEELEPEDEDRSASDSDD).

The protein belongs to the RPGRIP1 family. Interacts with NPHP4 and NPHP1; NPHP1, NPHP4 and RPGRIP1L are proposed to form a functional NPHP1-4-8 module localized to cell-cell contacts and the ciliary transition zone; NPHP4 mediates the interaction between NPHP1 and RPGRIP1L. Interacts with IQCB1; the interaction likely requires additional interactors. Interacts with TBXA2R (via C-terminus), RPGR, NEK4. Interacts with NPHP4, INVS and DVL2; proposed to form a complex involved in DVL2 stabilization. Interacts with PSMD2. Ubiquitously expressed. Not found in heart and skin.

Its subcellular location is the cytoplasm. The protein localises to the cytoskeleton. It localises to the cilium basal body. It is found in the cilium axoneme. The protein resides in the microtubule organizing center. Its subcellular location is the centrosome. The protein localises to the cell junction. It localises to the tight junction. Negatively regulates signaling through the G-protein coupled thromboxane A2 receptor (TBXA2R). May be involved in mechanisms like programmed cell death, craniofacial development, patterning of the limbs, and formation of the left-right axis. Involved in the organization of apical junctions; the function is proposed to implicate a NPHP1-4-8 module. Does not seem to be strictly required for ciliogenesis. Involved in establishment of planar cell polarity such as in cochlear sensory epithelium and is proposed to implicate stabilization of disheveled proteins. Involved in regulation of proteasomal activity at the primary cilium probably implicating association with PSDM2. The sequence is that of Protein fantom (Rpgrip1l) from Mus musculus (Mouse).